Consider the following 166-residue polypeptide: Lithostathine-1-beta (166 aa).

A signal peptide spans 1 to 22; it reads MAQTNSFFMLISSLMFLSLSQG. Thr27 carries O-linked (GalNAc...) threonine glycosylation. A C-type lectin domain is found at 34–164; sequence ISCPEGTNAY…EKKFSFVCKF (131 aa). Intrachain disulfides connect Cys36–Cys47, Cys64–Cys162, and Cys137–Cys154.

Post-translationally, all O-linked glycans consist of Gal-GlcNAc-Gal-GalNAc tetrasaccharide core and get elongated (microheterogeneity).

It localises to the secreted. Functionally, might act as an inhibitor of spontaneous calcium carbonate precipitation. May be associated with neuronal sprouting in brain, and with brain and pancreas regeneration. The protein is Lithostathine-1-beta (REG1B) of Homo sapiens (Human).